The sequence spans 63 residues: Large ribosomal subunit protein bL32 (63 aa).

Residues 1-22 (MANPKAKMSKSRRDKRRAQFNA) form a disordered region. Over residues 7-18 (KMSKSRRDKRRA) the composition is skewed to basic residues.

It belongs to the bacterial ribosomal protein bL32 family.

This is Large ribosomal subunit protein bL32 from Chlorobium limicola (strain DSM 245 / NBRC 103803 / 6330).